The primary structure comprises 274 residues: 2-amino-4,5-dihydroxy-6-oxo-7-(phosphonooxy)heptanoate synthase (274 aa).

This sequence belongs to the DeoC/FbaB aldolase family. GriI subfamily. Homodecamer.

It catalyses the reaction 2-amino-4,5-dihydroxy-6-oxo-7-(phosphooxy)heptanoate = L-aspartate 4-semialdehyde + dihydroxyacetone phosphate. Functionally, catalyzes aldol condensation between L-aspartate-4-semialdehyde (ASA) and dihydroxyacetone phosphate (DHAP), to form 2-amino-4,5-dihydroxy-6-oxo-7-(phosphonooxy)heptanoate. This Streptomyces griseus subsp. griseus (strain JCM 4626 / CBS 651.72 / NBRC 13350 / KCC S-0626 / ISP 5235) protein is 2-amino-4,5-dihydroxy-6-oxo-7-(phosphonooxy)heptanoate synthase (griI).